Consider the following 129-residue polypeptide: Lysozyme C, milk isozyme (129 aa).

The C-type lysozyme domain maps to 1-129 (KIFSKCELAR…LSKYLASCNL (129 aa)). 4 disulfides stabilise this stretch: C6–C127, C30–C115, C65–C80, and C76–C94. Active-site residues include E35 and D53. Ca(2+)-binding residues include K82, D85, N87, D90, and D91.

Belongs to the glycosyl hydrolase 22 family. As to quaternary structure, monomer. Ca(2+) is required as a cofactor.

It catalyses the reaction Hydrolysis of (1-&gt;4)-beta-linkages between N-acetylmuramic acid and N-acetyl-D-glucosamine residues in a peptidoglycan and between N-acetyl-D-glucosamine residues in chitodextrins.. Functionally, lysozymes have primarily a bacteriolytic function; those in tissues and body fluids are associated with the monocyte-macrophage system and enhance the activity of immunoagents. The protein is Lysozyme C, milk isozyme of Canis lupus familiaris (Dog).